The chain runs to 330 residues: Bifunctional pinoresinol-lariciresinol reductase 2 (330 aa).

NADP(+) is bound by residues 28-34 (GGTGYLG), Arg53, and Lys62. Lys156 serves as the catalytic Proton acceptor. Arg160 contacts NADP(+). His288 contacts substrate.

Belongs to the NmrA-type oxidoreductase family. Isoflavone reductase subfamily. In terms of assembly, dimer. In terms of tissue distribution, expressed in leaves, stems, leaves and seeds.

The catalysed reaction is (+)-lariciresinol + NADP(+) = (+)-pinoresinol + NADPH + H(+). It carries out the reaction (-)-secoisolariciresinol + NADP(+) = (+)-lariciresinol + NADPH + H(+). Reductase involved in lignan biosynthesis. Catalyzes the enantioselective conversion of (+)-pinoresinol into (+)-lariciresinol and of (+)-lariciresinol into (-)-secoisolariciresinol. Abstracts the 4R-hydride from the NADPH cofactor during catalysis. In Linum usitatissimum (Flax), this protein is Bifunctional pinoresinol-lariciresinol reductase 2 (PLR_Lu2).